A 170-amino-acid polypeptide reads, in one-letter code: Brassinosteroid-responsive RING protein 1 (170 aa).

The helical transmembrane segment at 15-37 threads the bilayer; the sequence is LFVQTLSILGFIRTIVFSIFRFL. The segment at 94–137 adopts an RING-type; atypical zinc-finger fold; the sequence is CAVCLYEFEGEQEIRWLRNCRHIFHRSCLDRWMDHDQKTCPLCR.

The protein belongs to the RING-type zinc finger family. In terms of tissue distribution, highly expressed in stems, rosette leaves and siliques, and moderately expressed in roots, cauline leaves and flower. Detected at low levels in seeds.

It is found in the membrane. In terms of biological role, may be involved in the brassinosteroids (BRs) signaling pathway and regulate the growth and development of rosette leaves. Seems to prevent over development of leaves and inflorescence stems. The protein is Brassinosteroid-responsive RING protein 1 of Arabidopsis thaliana (Mouse-ear cress).